The sequence spans 145 residues: D-aminoacyl-tRNA deacylase (145 aa).

The Gly-cisPro motif, important for rejection of L-amino acids motif lies at 137–138 (GP).

This sequence belongs to the DTD family. As to quaternary structure, homodimer.

It localises to the cytoplasm. The catalysed reaction is glycyl-tRNA(Ala) + H2O = tRNA(Ala) + glycine + H(+). It carries out the reaction a D-aminoacyl-tRNA + H2O = a tRNA + a D-alpha-amino acid + H(+). Functionally, an aminoacyl-tRNA editing enzyme that deacylates mischarged D-aminoacyl-tRNAs. Also deacylates mischarged glycyl-tRNA(Ala), protecting cells against glycine mischarging by AlaRS. Acts via tRNA-based rather than protein-based catalysis; rejects L-amino acids rather than detecting D-amino acids in the active site. By recycling D-aminoacyl-tRNA to D-amino acids and free tRNA molecules, this enzyme counteracts the toxicity associated with the formation of D-aminoacyl-tRNA entities in vivo and helps enforce protein L-homochirality. The protein is D-aminoacyl-tRNA deacylase of Shewanella oneidensis (strain ATCC 700550 / JCM 31522 / CIP 106686 / LMG 19005 / NCIMB 14063 / MR-1).